A 64-amino-acid polypeptide reads, in one-letter code: Large ribosomal subunit protein bL35 (64 aa).

Residues 1–45 (MPKMKTHKGAAKRFKKTGKGKIKRRKAFKSHILTKKTPKRKRNLR) are compositionally biased toward basic residues. Residues 1–64 (MPKMKTHKGA…EEKRIKRLLP (64 aa)) are disordered.

It belongs to the bacterial ribosomal protein bL35 family.

This Natranaerobius thermophilus (strain ATCC BAA-1301 / DSM 18059 / JW/NM-WN-LF) protein is Large ribosomal subunit protein bL35.